Here is a 174-residue protein sequence, read N- to C-terminus: MLRTESCRPRSPAGQVAAASPLLLLLLLLAWCAGACRGAPILPQGLQPEQQLQLWNEIDDTCSSFLSIDSQPQASNALEELCFMIMGMLPKPQEQDEKDNTKRFLFHYSKTQKLGKSNVVSSVVHPLLQLVPHLHERRMKRFRVDEEFQSPFASQSRGYFLFRPRNGRRSAGFI.

A signal peptide spans Met1–Gly34. Positions Ala35 to Arg103 are excised as a propeptide. Met139 is subject to Methionine sulfoxide; partial. Asparagine amide is present on Asn166. The propeptide occupies Ser170–Ile174.

Belongs to the NmU family. As to expression, expressed throughout the enteric nervous system with highest levels being found in the jejunum.

It is found in the secreted. Ligand for receptors NMUR1 and NMUR2. Stimulates muscle contractions of specific regions of the gastrointestinal tract. In humans, NmU stimulates contractions of the ileum and urinary bladder. Functionally, does not function as a ligand for either NMUR1 or NMUR2. Indirectly induces prolactin release although its potency is much lower than that of neuromedin precursor-related peptide 36. In terms of biological role, does not function as a ligand for either NMUR1 or NMUR2. Indirectly induces prolactin release from lactotroph cells in the pituitary gland, probably via the hypothalamic dopaminergic system. The protein is Neuromedin-U (NMU) of Homo sapiens (Human).